A 546-amino-acid chain; its full sequence is Mitochondrial distribution and morphology protein 34 (546 aa).

The region spanning Met1 to Leu195 is the SMP-LTD domain. Disordered stretches follow at residues Glu208 to Val230, Ser299 to Ala319, Thr344 to Ser382, Ser395 to Ala416, and Arg517 to Gln546. Over residues Arg349–Arg362 the composition is skewed to basic residues. Over residues Val363–Asp374 the composition is skewed to basic and acidic residues.

Belongs to the MDM34 family. Component of the ER-mitochondria encounter structure (ERMES) or MDM complex, composed of MMM1, MDM10, MDM12 and MDM34.

The protein localises to the mitochondrion outer membrane. Functionally, component of the ERMES/MDM complex, which serves as a molecular tether to connect the endoplasmic reticulum (ER) and mitochondria. Components of this complex are involved in the control of mitochondrial shape and protein biogenesis, and function in nonvesicular lipid trafficking between the ER and mitochondria. MDM34 is required for the interaction of the ER-resident membrane protein MMM1 and the outer mitochondrial membrane-resident beta-barrel protein MDM10. In Arthroderma otae (strain ATCC MYA-4605 / CBS 113480) (Microsporum canis), this protein is Mitochondrial distribution and morphology protein 34.